Here is a 429-residue protein sequence, read N- to C-terminus: Cytochrome bc1 complex Rieske iron-sulfur subunit (429 aa).

Residues 1-45 (MSRADDDAVGVPPTCGGRSDEEERRIVPGPNPQDGAKDGAKATAV) are disordered. The next 3 membrane-spanning stretches (helical) occupy residues 96 to 116 (VAVW…IFLF), 137 to 157 (PLYG…AVLY), and 207 to 227 (FGVG…GGLI). A Rieske domain is found at 316 to 410 (RNPVMLIRIK…ITIDTDGYLV (95 aa)). [2Fe-2S] cluster contacts are provided by cysteine 353, histidine 355, cysteine 372, and histidine 375. Residues cysteine 358 and cysteine 374 are joined by a disulfide bond.

It belongs to the Rieske iron-sulfur protein family. In terms of assembly, the cytochrome bc1 complex is composed of a cytochrome b (QcrB), the Rieske iron-sulfur protein (QcrA) and a diheme cytochrome c (QcrC) subunit. Requires [2Fe-2S] cluster as cofactor.

The protein resides in the cell membrane. Its function is as follows. Iron-sulfur subunit of the cytochrome bc1 complex, an essential component of the respiratory electron transport chain required for ATP synthesis. The bc1 complex catalyzes the oxidation of menaquinol and the reduction of cytochrome c in the respiratory chain. The bc1 complex operates through a Q-cycle mechanism that couples electron transfer to generation of the proton gradient that drives ATP synthesis. This Mycobacterium bovis (strain ATCC BAA-935 / AF2122/97) protein is Cytochrome bc1 complex Rieske iron-sulfur subunit (qcrA).